An 82-amino-acid chain; its full sequence is Short neurotoxin OKI-10 (82 aa).

Positions 1 to 20 are cleaved as a signal peptide; it reads KTLLLTLVVVTIVCLDLGYT. Disulfide bonds link cysteine 23–cysteine 44, cysteine 37–cysteine 61, cysteine 63–cysteine 74, and cysteine 75–cysteine 80.

Belongs to the three-finger toxin family. Short-chain subfamily. Type I alpha-neurotoxin sub-subfamily. In terms of tissue distribution, expressed by the venom gland.

It localises to the secreted. Its function is as follows. Binds to muscle nicotinic acetylcholine receptor (nAChR) and inhibit acetylcholine from binding to the receptor, thereby impairing neuromuscular transmission. The chain is Short neurotoxin OKI-10 from Laticauda laticaudata (Blue-ringed sea krait).